The following is a 147-amino-acid chain: Large ribosomal subunit protein bL9 (147 aa).

This sequence belongs to the bacterial ribosomal protein bL9 family.

Functionally, binds to the 23S rRNA. The protein is Large ribosomal subunit protein bL9 of Trichlorobacter lovleyi (strain ATCC BAA-1151 / DSM 17278 / SZ) (Geobacter lovleyi).